The sequence spans 307 residues: Ribonuclease Z (307 aa).

H63, H65, D67, H68, H143, D213, and H271 together coordinate Zn(2+). D67 functions as the Proton acceptor in the catalytic mechanism.

The protein belongs to the RNase Z family. Homodimer. Zn(2+) serves as cofactor.

It catalyses the reaction Endonucleolytic cleavage of RNA, removing extra 3' nucleotides from tRNA precursor, generating 3' termini of tRNAs. A 3'-hydroxy group is left at the tRNA terminus and a 5'-phosphoryl group is left at the trailer molecule.. Functionally, zinc phosphodiesterase, which displays some tRNA 3'-processing endonuclease activity. Probably involved in tRNA maturation, by removing a 3'-trailer from precursor tRNA. In Lactococcus lactis subsp. lactis (strain IL1403) (Streptococcus lactis), this protein is Ribonuclease Z.